The chain runs to 426 residues: tRNA methyltransferase 10 homolog C (426 aa).

The transit peptide at 1-41 (MPVLLKMSVSITFLRPFARVLVPFTLHRKRRVLYSTIMQRY) directs the protein to the mitochondrion. Phosphoserine is present on serine 86. Residues 138 to 166 (LYIKEKMKKARQIKKEMKKAEKEEPKKDQ) are a coiled coil. Residues 193-385 (MGWKGAQAMQ…KFVPSRKHAG (193 aa)) form the SAM-dependent MTase TRM10-type domain.

It belongs to the class IV-like SAM-binding methyltransferase superfamily. TRM10 family. Component of mitochondrial ribonuclease P, a complex composed of TRMT10C/MRPP1, HSD17B10/MRPP2 and PRORP/MRPP3. Interacts with HSD17B10/MRPP2; forming the MRPP1-MRPP2 subcomplex of the mitochondrial ribonuclease P complex. Interacts with GRSF1.

The protein localises to the mitochondrion matrix. Its subcellular location is the mitochondrion nucleoid. The enzyme catalyses adenosine(9) in tRNA + S-adenosyl-L-methionine = N(1)-methyladenosine(9) in tRNA + S-adenosyl-L-homocysteine + H(+). The catalysed reaction is guanosine(9) in tRNA + S-adenosyl-L-methionine = N(1)-methylguanosine(9) in tRNA + S-adenosyl-L-homocysteine + H(+). It carries out the reaction an adenosine in mRNA + S-adenosyl-L-methionine = an N(1)-methyladenosine in mRNA + S-adenosyl-L-homocysteine + H(+). Mitochondrial tRNA N(1)-methyltransferase involved in mitochondrial tRNA maturation. Component of mitochondrial ribonuclease P, a complex composed of TRMT10C/MRPP1, HSD17B10/MRPP2 and PRORP/MRPP3, which cleaves tRNA molecules in their 5'-ends. Together with HSD17B10/MRPP2, forms a subcomplex of the mitochondrial ribonuclease P, named MRPP1-MRPP2 subcomplex, which displays functions that are independent of the ribonuclease P activity. The MRPP1-MRPP2 subcomplex catalyzes the formation of N(1)-methylguanine and N(1)-methyladenine at position 9 (m1G9 and m1A9, respectively) in tRNAs; TRMT10C/MRPP1 acting as the catalytic N(1)-methyltransferase subunit. The MRPP1-MRPP2 subcomplex also acts as a tRNA maturation platform: following 5'-end cleavage by the mitochondrial ribonuclease P complex, the MRPP1-MRPP2 subcomplex enhances the efficiency of 3'-processing catalyzed by ELAC2, retains the tRNA product after ELAC2 processing and presents the nascent tRNA to the mitochondrial CCA tRNA nucleotidyltransferase TRNT1 enzyme. In addition to tRNA N(1)-methyltransferase activity, TRMT10C/MRPP1 also acts as a mRNA N(1)-methyltransferase by mediating methylation of adenosine residues at the N(1) position of MT-ND5 mRNA. Associates with mitochondrial DNA complexes at the nucleoids to initiate RNA processing and ribosome assembly. The protein is tRNA methyltransferase 10 homolog C of Bos taurus (Bovine).